A 62-amino-acid polypeptide reads, in one-letter code: Photosystem II reaction center protein Z (62 aa).

A run of 2 helical transmembrane segments spans residues 8 to 28 (ALFALVALSFLLVVGVPVAFA) and 41 to 61 (FQGVSAWFALVFTVGVLNSLV).

Belongs to the PsbZ family. PSII is composed of 1 copy each of membrane proteins PsbA, PsbB, PsbC, PsbD, PsbE, PsbF, PsbH, PsbI, PsbJ, PsbK, PsbL, PsbM, PsbT, PsbY, PsbZ, Psb30/Ycf12, at least 3 peripheral proteins of the oxygen-evolving complex and a large number of cofactors. It forms dimeric complexes.

Its subcellular location is the plastid. It is found in the chloroplast thylakoid membrane. In terms of biological role, may control the interaction of photosystem II (PSII) cores with the light-harvesting antenna, regulates electron flow through the 2 photosystem reaction centers. PSII is a light-driven water plastoquinone oxidoreductase, using light energy to abstract electrons from H(2)O, generating a proton gradient subsequently used for ATP formation. In Nephroselmis olivacea (Green alga), this protein is Photosystem II reaction center protein Z.